The following is a 1040-amino-acid chain: Myoblast growth factor receptor egl-15 (1040 aa).

Positions 1-19 are cleaved as a signal peptide; the sequence is MSYFLASCLGVGLLSTVSC. At 20–525 the chain is on the extracellular side; that stretch reads SLQGLTSHYR…PKIDRWTTSD (506 aa). The Ig-like C2-type 1 domain occupies 33-125; it reads PRFKHVANER…GQISRNFTVE (93 aa). A disulfide bridge links Cys-55 with Cys-109. Asn-121 is a glycosylation site (N-linked (GlcNAc...) asparagine). Residues 234–257 are compositionally biased toward basic and acidic residues; the sequence is VHDSEESPSESRTEFINADEKENK. Residues 234–267 are disordered; that stretch reads VHDSEESPSESRTEFINADEKENKEDEEEDYSVS. N-linked (GlcNAc...) asparagine glycosylation is found at Asn-280 and Asn-299. Ig-like C2-type domains follow at residues 287–383 and 391–501; these read PYFK…FHVI and PPII…ATLT. Cys-314 and Cys-367 are oxidised to a cystine. Residues Asn-401, Asn-407, Asn-433, Asn-440, Asn-449, Asn-474, and Asn-497 are each glycosylated (N-linked (GlcNAc...) asparagine). Cys-414 and Cys-485 are joined by a disulfide. A helical transmembrane segment spans residues 526–549; the sequence is YIFTTILLFLLLAATLFGILFMVC. The Cytoplasmic portion of the chain corresponds to 550-1040; it reads KQTLHKKGFM…NNNSMSKPEF (491 aa). One can recognise a Protein kinase domain in the interval 640–931; that stretch reads LSLVHMLGEG…KTIVDYLDWM (292 aa). ATP is bound by residues 646-654 and Lys-672; that span reads LGEGAFGEV. The active-site Proton acceptor is Asp-797. Tyr-828 carries the phosphotyrosine; by autocatalysis modification. Disordered stretches follow at residues 952 to 984 and 1021 to 1040; these read ERST…LPSE and TPET…KPEF. Over residues 1022-1040 the composition is skewed to polar residues; sequence PETSQRIPSNNNSMSKPEF.

Belongs to the protein kinase superfamily. Tyr protein kinase family. Fibroblast growth factor receptor subfamily. Requires Mg(2+) as cofactor. In terms of processing, activity is regulated by the phosphatase clr-1, however it is not known whether clr-1 acts directly on egl-15.

It localises to the membrane. It carries out the reaction L-tyrosyl-[protein] + ATP = O-phospho-L-tyrosyl-[protein] + ADP + H(+). Its function is as follows. Receptor tyrosine kinase required for larval development. May phosphorylate adapter protein soc-1 which in turn may result in the recruitment and/or activation of phosphatase ptp-2. May activate the Ras/MAPK kinase signaling pathway which includes sem-5, sos-1, let-60/Ras, lin-45/Raf, mek-2 and mpk-1. Acts in the hypodermis to regulate axon growth and fluid homeostasis. Activates protein degradation in muscles. Probably following interaction with ligand let-756, negatively regulates membrane protrusion from body wall muscles during larval development. Plays a role in nicotinic acetylcholine receptor (nAChR)-mediated sensitivity to nicotine. Regulates synaptic levels of nAChR subunit lev-1 in the nerve cord. In terms of biological role, affects the maintenance of axon position without affecting axon growth. Interaction with egl-17 is required for the guidance of sex myoblast migration during gonad development. Functionally, interaction with let-756 appears to play a role in maintaining body morphology at higher temperatures. This Caenorhabditis elegans protein is Myoblast growth factor receptor egl-15 (egl-15).